The primary structure comprises 138 residues: Large ribosomal subunit protein uL16 (138 aa).

This sequence belongs to the universal ribosomal protein uL16 family. In terms of assembly, part of the 50S ribosomal subunit.

Its function is as follows. Binds 23S rRNA and is also seen to make contacts with the A and possibly P site tRNAs. In Hyphomonas neptunium (strain ATCC 15444), this protein is Large ribosomal subunit protein uL16.